We begin with the raw amino-acid sequence, 613 residues long: Probable inactive purple acid phosphatase 1 (613 aa).

The N-terminal stretch at 1–24 (MRESLVAILVTVISVLGAIHQVKS) is a signal peptide. 2 N-linked (GlcNAc...) asparagine glycosylation sites follow: asparagine 89 and asparagine 116. Position 295 (aspartate 295) interacts with Fe cation. Asparagine 316 carries N-linked (GlcNAc...) asparagine glycosylation. Positions 336 and 339 each coordinate Fe cation. Position 336 (aspartate 336) interacts with Zn(2+). The Zn(2+) site is built by asparagine 369, histidine 458, and histidine 500. Asparagine 369 contributes to the substrate binding site. Position 500–502 (500–502 (HAH)) interacts with substrate. Fe cation is bound at residue histidine 502. Asparagine 528 and asparagine 551 each carry an N-linked (GlcNAc...) asparagine glycan.

Belongs to the metallophosphoesterase superfamily. Purple acid phosphatase family. As to quaternary structure, homodimer. Fe cation serves as cofactor. The cofactor is Zn(2+). Expressed in roots, stems, leaves, flowers and siliques.

It is found in the secreted. In Arabidopsis thaliana (Mouse-ear cress), this protein is Probable inactive purple acid phosphatase 1 (PAP1).